A 925-amino-acid polypeptide reads, in one-letter code: Coronin-7 (925 aa).

WD repeat units follow at residues 75-115 (CHSD…QALP), 124-163 (PEDLPVEVLQFHPTSDGILVSAAGTTVKVWDAAKQQPLTE), 166-205 (AHGDLVQSAVWSRDGALVGTACKDKQLRIFDPRTKPRASQ), and 209-253 (AHEN…SALA). The tract at residues 419-461 (VGDADASEGFSSPPSSLTSPSTPSSLGPSLSSTSGIGTSPSLR) is disordered. Over residues 429–460 (SSPPSSLTSPSTPSSLGPSLSSTSGIGTSPSL) the composition is skewed to low complexity. A phosphoserine mark is found at Ser-462 and Ser-465. Residue Lys-472 forms a Glycyl lysine isopeptide (Lys-Gly) (interchain with G-Cter in ubiquitin) linkage. WD repeat units follow at residues 542–582 (QNGA…LEEV), 592–632 (GHTE…DRLK), and 635–674 (GHQDQIFSLAWSPDGQQLATVCKDGRVRVYRPRSGPEPLQ). Residue Lys-680 forms a Glycyl lysine isopeptide (Lys-Gly) (interchain with G-Cter in ubiquitin) linkage. The stretch at 728 to 768 (DVAPSTLLPSYDPDTGLVLLTGKGDTRVFLYELLPESPFFL) is one WD 8 repeat. The tract at residues 858 to 925 (QPPDMSPVSQ…FEGVDEDEWD (68 aa)) is disordered. Residues 866–882 (SQAPREAPARRAPSSAQ) show a composition bias toward low complexity. Positions 884–896 (LEEKSDQQKKEEL) are enriched in basic and acidic residues. Position 915 is a phosphoserine (Ser-915).

Belongs to the WD repeat coronin family. As to quaternary structure, interacts with clathrin adapter AP1 complex. This interaction takes place at Golgi membranes and not AP1-positive endosomal membranes. Interacts (when ubiquitinated at Lys-472) with EPS15. The membrane-associated form is phosphorylated on tyrosine residues. Post-translationally, ubiquitinated via 'Lys-33'-linked ubiquitin chains by the BCR(KLHL20) E3 ubiquitin ligase complex: 'Lys-33'-linked ubiquitination promotes interaction with EPS15 and facilitates actin polymerization at the trans-Golgi network, thereby facilitating post-Golgi trafficking. Deubiquitinated by ZRANB1/TRABID. As to expression, widely expressed. Expressed in the spleen, peripheral leukocytes, testes, brain, thymus and small intestine.

The protein resides in the golgi apparatus membrane. It is found in the golgi apparatus. Its subcellular location is the trans-Golgi network. The protein localises to the cytoplasmic vesicle. It localises to the cytoplasm. The protein resides in the cytosol. In terms of biological role, F-actin regulator involved in anterograde Golgi to endosome transport: upon ubiquitination via 'Lys-33'-linked ubiquitin chains by the BCR(KLHL20) E3 ubiquitin ligase complex, interacts with EPS15 and localizes to the trans-Golgi network, where it promotes actin polymerization, thereby facilitating post-Golgi trafficking. May play a role in the maintenance of the Golgi apparatus morphology. The chain is Coronin-7 (CORO7) from Homo sapiens (Human).